The following is a 451-amino-acid chain: Heme sensor protein HssS (451 aa).

Helical transmembrane passes span 9 to 29 (IAIY…LFTN) and 164 to 184 (IFLA…VIAS). In terms of domain architecture, HAMP spans 186-238 (YSIIKPVTALKNATTRIMKGDFSTPIKQTRHDEIGTLQSRFNTMRQNLGQVDQ). A Histidine kinase domain is found at 246 to 451 (NVSHEIKTPL…KTQFIVKLFI (206 aa)). At His-249 the chain carries Phosphohistidine; by autocatalysis.

Post-translationally, autophosphorylated.

The protein localises to the cell membrane. It catalyses the reaction ATP + protein L-histidine = ADP + protein N-phospho-L-histidine.. Functionally, member of the two-component regulatory system HssS/HssR involved in intracellular heme homeostasis and tempering of staphylococcal virulence. HssS functions as a heme sensor histidine kinase which is autophosphorylated at a histidine residue and transfers its phosphate group to an aspartate residue of HssR. HssR/HssS activates the expression of HrtAB, an efflux pump, in response to extracellular heme, hemin, hemoglobin or blood. The chain is Heme sensor protein HssS (hssS) from Staphylococcus epidermidis (strain ATCC 12228 / FDA PCI 1200).